We begin with the raw amino-acid sequence, 89 residues long: Small ribosomal subunit protein uS15 (89 aa).

Belongs to the universal ribosomal protein uS15 family. Part of the 30S ribosomal subunit. Forms a bridge to the 50S subunit in the 70S ribosome, contacting the 23S rRNA.

One of the primary rRNA binding proteins, it binds directly to 16S rRNA where it helps nucleate assembly of the platform of the 30S subunit by binding and bridging several RNA helices of the 16S rRNA. Functionally, forms an intersubunit bridge (bridge B4) with the 23S rRNA of the 50S subunit in the ribosome. In Methylobacterium nodulans (strain LMG 21967 / CNCM I-2342 / ORS 2060), this protein is Small ribosomal subunit protein uS15.